We begin with the raw amino-acid sequence, 346 residues long: Transcription termination factor 4, mitochondrial (346 aa).

The transit peptide at 1-42 directs the protein to the mitochondrion; that stretch reads MASLGRQVPEWHRLLALSWACLVRQTPHLREQKQMSPSLSCK. 5 MTERF repeats span residues 142–172, 177–204, 209–239, 245–270, and 290–318; these read FNAL…LGLG, KRVL…LREK, AQHI…YAYF, HLDI…YLER, and LRNI…VFKK. The tract at residues 310-327 is dimerization with NSUN4; the sequence is VEEFQVFKKLLDQEEEEE. The tract at residues 321-346 is disordered; that stretch reads DQEEEEESESHASEEEEEEEEEEELL. Residues 322 to 346 show a composition bias toward acidic residues; that stretch reads QEEEEESESHASEEEEEEEEEEELL.

It belongs to the mTERF family. In terms of assembly, heterodimer with NSUN4; this interaction may be required for NSUN4 recruitment to the mitochondrial large ribosomal subunit. As to expression, widely expressed, with highest levels in liver, followed by testis, kidney and brain.

It localises to the mitochondrion. In terms of biological role, regulator of mitochondrial ribosome biogenesis and translation. Binds to mitochondrial ribosomal RNAs 16S, 12S and 7S. Targets NSUN4 RNA methyltransferase to the mitochondrial large ribosomal subunit. This Mus musculus (Mouse) protein is Transcription termination factor 4, mitochondrial (Mterf4).